A 343-amino-acid polypeptide reads, in one-letter code: ATP-dependent (S)-NAD(P)H-hydrate dehydratase (343 aa).

The N-terminal 42 residues, 1–42 (MAVHACGAAAAVVALLSAAIALQWSPLYAVLQRALSLHTAHA), are a transit peptide targeting the mitochondrion. The region spanning 49–340 (LFQLVRNIVP…TEVGTAFSRL (292 aa)) is the YjeF C-terminal domain. Lysine 63 is modified (N6-acetyllysine). Tyrosine 81 is subject to Phosphotyrosine. Residues glycine 149 and 202–208 (NHVEFSR) contribute to the (6S)-NADPHX site. Position 216 is a phosphoserine (serine 216). ATP-binding positions include 242–246 (KGEQD) and 261–270 (GSSRRCGGQG). Aspartate 271 provides a ligand contact to (6S)-NADPHX.

It belongs to the NnrD/CARKD family. Mg(2+) is required as a cofactor.

It is found in the mitochondrion. The catalysed reaction is (6S)-NADHX + ATP = ADP + phosphate + NADH + H(+). The enzyme catalyses (6S)-NADPHX + ATP = ADP + phosphate + NADPH + H(+). In terms of biological role, catalyzes the dehydration of the S-form of NAD(P)HX at the expense of ATP, which is converted to ADP. Together with NAD(P)HX epimerase, which catalyzes the epimerization of the S- and R-forms, the enzyme allows the repair of both epimers of NAD(P)HX, a damaged form of NAD(P)H that is a result of enzymatic or heat-dependent hydration. The sequence is that of ATP-dependent (S)-NAD(P)H-hydrate dehydratase from Mus musculus (Mouse).